The primary structure comprises 1247 residues: SAM and SH3 domain-containing protein 1 (1247 aa).

The interval 1 to 39 (MEDAGAAGPGPEPEPEPEPEPEPAPEPEPEPKPGAGTSE) is disordered. A compositionally biased stretch (acidic residues) spans 13-28 (PEPEPEPEPEPAPEPE). Ser90 bears the Phosphoserine mark. Disordered regions lie at residues 126–145 (VERKNPLHKSNSEDSSVGKG), 221–257 (AALDPADWPDGSYPTFDGSSNCNSREQSDDETEESVK), and 316–344 (FFDGSPEKPPEDDSDSLTTSPSSSSLDTW). Ser248 carries the phosphoserine modification. A compositionally biased stretch (low complexity) spans 331–343 (SLTTSPSSSSLDT). Ser407 carries the phosphoserine modification. Residues 449–573 (SLGKKVKSVK…DFTPSPYDTD (125 aa)) are disordered. Composition is skewed to low complexity over residues 468–484 (KYSSSVSEQDSGLDGMP) and 505–523 (GGSVESLRSSLSGQSSMSG). Residues 524-536 (QTVSTTDSSTSNR) are compositionally biased toward polar residues. The SH3 domain occupies 554-615 (PFCGRARVHT…KFIYVDVLSE (62 aa)). Ser614 carries the post-translational modification Phosphoserine. Disordered regions lie at residues 616–639 (DEEKPKRPTRRRRKGRPPQPKSVE) and 713–810 (DSQG…LNKN). Residues 622 to 631 (RPTRRRRKGR) are compositionally biased toward basic residues. Positions 633-697 (PQPKSVEDLL…LTAVELLQEY (65 aa)) constitute an SAM 1 domain. Residues 746–765 (SAKSSTEPSLKSFSRNQLGN) are compositionally biased toward polar residues. Ser821 and Ser839 each carry phosphoserine. Disordered stretches follow at residues 846-884 (EPGAEQDVPTEVTEPPPQIVPEVPQKTTASSTKAQPLEQ), 903-946 (PQKL…LART), and 971-1065 (DAEQ…SELP). The interval 852–860 (DVPTEVTEP) is required for interaction with TRAF6. Phosphothreonine is present on Thr858. Pro residues predominate over residues 1050 to 1060 (GSPPSTRPPPW). The SAM 2 domain maps to 1177 to 1241 (GCISSVSDWL…LSAARLFKLP (65 aa)).

In terms of assembly, interacts with GNAS. Interacts with IQGAP1. Interacts with TRAF6 (via C-terminus); the interaction is LPS-dependent. Interacts with MAP3K7, CHUK and IKBKB. Expressed ubiquitously, with highest levels in lung, placenta, spleen and thymus. Down-regulated in the majority (74%) of breast tumors in comparison with corresponding normal breast epithelial tissues. Expressed in the epidermis, epidermal keratinocytes, dermal fibroblasts and melanocytes.

The protein resides in the cytoplasm. Its function is as follows. Is a positive regulator of NF-kappa-B signaling downstream of TLR4 activation. It acts as a scaffold molecule to assemble a molecular complex that includes TRAF6, MAP3K7, CHUK and IKBKB, thereby facilitating NF-kappa-B signaling activation. Regulates TRAF6 and MAP3K7 ubiquitination. Involved in the regulation of cell mobility. Regulates lipolysaccharide (LPS)-induced endothelial cell migration. Is involved in the regulation of skin pigmentation through the control of melanocyte migration in the epidermis. The chain is SAM and SH3 domain-containing protein 1 (SASH1) from Homo sapiens (Human).